The primary structure comprises 255 residues: tRNA (guanine-N(1)-)-methyltransferase (255 aa).

S-adenosyl-L-methionine contacts are provided by residues glycine 121 and 141 to 146 (IGDYVL). The disordered stretch occupies residues 236–255 (PVKAPNRAGRQKTPKNKTDG). A compositionally biased stretch (basic residues) spans 244-255 (GRQKTPKNKTDG).

Belongs to the RNA methyltransferase TrmD family. As to quaternary structure, homodimer.

Its subcellular location is the cytoplasm. The enzyme catalyses guanosine(37) in tRNA + S-adenosyl-L-methionine = N(1)-methylguanosine(37) in tRNA + S-adenosyl-L-homocysteine + H(+). Functionally, specifically methylates guanosine-37 in various tRNAs. This is tRNA (guanine-N(1)-)-methyltransferase from Bradyrhizobium diazoefficiens (strain JCM 10833 / BCRC 13528 / IAM 13628 / NBRC 14792 / USDA 110).